The following is an 84-amino-acid chain: ATPase-stabilizing factor 15 kDa protein (84 aa).

Basic and acidic residues predominate over residues 1 to 18; sequence MTRTNKWTEREGKADPKY. A disordered region spans residues 1-84; it reads MTRTNKWTER…EQKFENVQKE (84 aa). A phosphoserine mark is found at Ser28 and Ser69. Over residues 74 to 84 the composition is skewed to basic and acidic residues; the sequence is HEQKFENVQKE.

The protein belongs to the STF2 family.

The protein resides in the mitochondrion. Its subcellular location is the cytoplasm. Functionally, found to stabilize, together with STF1, a complex of intrinsic ATPase inhibitor INH1 and proton-translocating ATPase (F(1)F(0)-ATPase) in mitochondrial membranes. Binds to the F0 part and may function to hold the ATPase inhibitor or STF1 on the F1 subunit. Also acts as a hydrophilins that enhances dry stress tolerance. Cell viability after desiccation and rehydration is due to the antioxidant capacity of the protein, which reduces the number of apoptotic cells during stress conditions by minimising the accumulation of reactive oxygen species (ROS) in the cells. The protein is ATPase-stabilizing factor 15 kDa protein (STF2) of Saccharomyces cerevisiae (strain ATCC 204508 / S288c) (Baker's yeast).